Here is a 660-residue protein sequence, read N- to C-terminus: Oligopeptide-binding protein AliA (660 aa).

The N-terminal stretch at 1 to 22 is a signal peptide; the sequence is MKSSKLFALAGVTLLAATTLAA. Cys23 is lipidated: N-palmitoyl cysteine. Residue Cys23 is the site of S-diacylglycerol cysteine attachment. Positions 638–660 are disordered; sequence EKWMKEKEESNKKAQEDLAKHVK.

This sequence belongs to the bacterial solute-binding protein 5 family.

The protein localises to the cell membrane. Its function is as follows. Part of the binding-protein-dependent transport system for oligopeptides; probably an oligopeptide binding protein. The sequence is that of Oligopeptide-binding protein AliA (aliA) from Streptococcus pneumoniae serotype 4 (strain ATCC BAA-334 / TIGR4).